The primary structure comprises 728 residues: Catalase-peroxidase 1 (728 aa).

A signal peptide spans 1 to 16 (MDKAQHTQGKCPVAHG). A cross-link (tryptophyl-tyrosyl-methioninium (Trp-Tyr) (with M-251)) is located at residues 97–225 (WHSAGTYRMA…LAAVMMGLIY (129 aa)). The Proton acceptor role is filled by H98. The tryptophyl-tyrosyl-methioninium (Tyr-Met) (with W-97) cross-link spans 225–251 (YVNPEGVDGQPDPLKTAQDIRVTFERM). H266 contributes to the heme b binding site.

Belongs to the peroxidase family. Peroxidase/catalase subfamily. In terms of assembly, homodimer or homotetramer. It depends on heme b as a cofactor. In terms of processing, formation of the three residue Trp-Tyr-Met cross-link is important for the catalase, but not the peroxidase activity of the enzyme.

The enzyme catalyses H2O2 + AH2 = A + 2 H2O. It carries out the reaction 2 H2O2 = O2 + 2 H2O. Functionally, bifunctional enzyme with both catalase and broad-spectrum peroxidase activity. In Shewanella frigidimarina (strain NCIMB 400), this protein is Catalase-peroxidase 1.